A 446-amino-acid chain; its full sequence is Probable D-serine dehydratase (446 aa).

An N6-(pyridoxal phosphate)lysine modification is found at K116.

This sequence belongs to the serine/threonine dehydratase family. DsdA subfamily. The cofactor is pyridoxal 5'-phosphate.

It carries out the reaction D-serine = pyruvate + NH4(+). This Bacillus cereus (strain 03BB102) protein is Probable D-serine dehydratase.